We begin with the raw amino-acid sequence, 527 residues long: Arginine--tRNA ligase (527 aa).

Residues 108 to 118 (ANPTGPLHIGH) carry the 'HIGH' region motif.

It belongs to the class-I aminoacyl-tRNA synthetase family. In terms of assembly, monomer.

It is found in the cytoplasm. The enzyme catalyses tRNA(Arg) + L-arginine + ATP = L-arginyl-tRNA(Arg) + AMP + diphosphate. This chain is Arginine--tRNA ligase, found in Sulfurimonas denitrificans (strain ATCC 33889 / DSM 1251) (Thiomicrospira denitrificans (strain ATCC 33889 / DSM 1251)).